Here is a 155-residue protein sequence, read N- to C-terminus: Small ribosomal subunit protein uS7 (155 aa).

It belongs to the universal ribosomal protein uS7 family. As to quaternary structure, part of the 30S ribosomal subunit. Contacts proteins S9 and S11.

In terms of biological role, one of the primary rRNA binding proteins, it binds directly to 16S rRNA where it nucleates assembly of the head domain of the 30S subunit. Is located at the subunit interface close to the decoding center, probably blocks exit of the E-site tRNA. The sequence is that of Small ribosomal subunit protein uS7 from Mesoplasma florum (strain ATCC 33453 / NBRC 100688 / NCTC 11704 / L1) (Acholeplasma florum).